The chain runs to 69 residues: Pleurain-A4 (69 aa).

The signal sequence occupies residues 1 to 22 (MFTLKKTLLLLFFLGTISISLC). A propeptide spanning residues 23 to 43 (KQERDADEDDGRKMTEEEVKR) is cleaved from the precursor. Cys-63 and Cys-69 are oxidised to a cystine.

This sequence belongs to the frog skin active peptide (FSAP) family. Pleurain subfamily. As to expression, expressed by the skin glands.

It localises to the secreted. Antimicrobial peptide. Has activity against Gram-positive and -negative bacteria, and fungi. Has little hemolytic activity on red blood cells. This Nidirana pleuraden (Yunnan pond frog) protein is Pleurain-A4.